Reading from the N-terminus, the 243-residue chain is MRTRIIVNGANGKMGILACETLENHEQFEIVAKLSRQDNLGQSILDTKAQIVVDLTRADCVYENSLTIINHGARPVIGTSGLVETQIDELTKLCEIKQIGGIIAPNFSLGAILMMILATKASEYFSEVEIIEGHHQQKLDAPSGTALKTAEMIAAARKKPKNKLPLKELTPGARGGSHHDINIHSLRLPGLLARQEVLFGNIGETLSITHNSIDRRCFMPGIVLACQKVLNLNNLVYGLEHLL.

NAD(+) is bound by residues 9 to 14 (GANGKM), 78 to 80 (GTS), and 104 to 107 (APNF). Histidine 134 acts as the Proton donor/acceptor in catalysis. Residue histidine 135 participates in (S)-2,3,4,5-tetrahydrodipicolinate binding. Catalysis depends on lysine 138, which acts as the Proton donor. (S)-2,3,4,5-tetrahydrodipicolinate is bound at residue 144 to 145 (GT).

Belongs to the DapB family.

It localises to the cytoplasm. It carries out the reaction (S)-2,3,4,5-tetrahydrodipicolinate + NAD(+) + H2O = (2S,4S)-4-hydroxy-2,3,4,5-tetrahydrodipicolinate + NADH + H(+). The enzyme catalyses (S)-2,3,4,5-tetrahydrodipicolinate + NADP(+) + H2O = (2S,4S)-4-hydroxy-2,3,4,5-tetrahydrodipicolinate + NADPH + H(+). It participates in amino-acid biosynthesis; L-lysine biosynthesis via DAP pathway; (S)-tetrahydrodipicolinate from L-aspartate: step 4/4. Functionally, catalyzes the conversion of 4-hydroxy-tetrahydrodipicolinate (HTPA) to tetrahydrodipicolinate. In Legionella pneumophila subsp. pneumophila (strain Philadelphia 1 / ATCC 33152 / DSM 7513), this protein is 4-hydroxy-tetrahydrodipicolinate reductase.